Here is a 189-residue protein sequence, read N- to C-terminus: UPF0301 protein bbp_491 (189 aa).

It belongs to the UPF0301 (AlgH) family.

The chain is UPF0301 protein bbp_491 from Buchnera aphidicola subsp. Baizongia pistaciae (strain Bp).